A 270-amino-acid chain; its full sequence is Ribosomal RNA small subunit methyltransferase J (270 aa).

S-adenosyl-L-methionine-binding positions include 126–127 and aspartate 182; that span reads ER.

The protein belongs to the methyltransferase superfamily. RsmJ family.

It is found in the cytoplasm. The enzyme catalyses guanosine(1516) in 16S rRNA + S-adenosyl-L-methionine = N(2)-methylguanosine(1516) in 16S rRNA + S-adenosyl-L-homocysteine + H(+). Functionally, specifically methylates the guanosine in position 1516 of 16S rRNA. This is Ribosomal RNA small subunit methyltransferase J from Acinetobacter baylyi (strain ATCC 33305 / BD413 / ADP1).